Reading from the N-terminus, the 218-residue chain is PKHD-type hydroxylase IL0759 (218 aa).

In terms of domain architecture, Fe2OG dioxygenase spans 76 to 170; sequence QVARVTINRY…RLAMIGWVQS (95 aa). Residues His-94, Asp-96, and His-151 each contribute to the Fe cation site. Arg-161 contributes to the 2-oxoglutarate binding site.

The cofactor is Fe(2+). Requires L-ascorbate as cofactor.

The chain is PKHD-type hydroxylase IL0759 from Idiomarina loihiensis (strain ATCC BAA-735 / DSM 15497 / L2-TR).